The chain runs to 394 residues: Elongation factor Tu (394 aa).

Positions 10–204 (KTHLNVGTIG…TLDTYIEDPV (195 aa)) constitute a tr-type G domain. The interval 19-26 (GHVDHGKT) is G1. 19 to 26 (GHVDHGKT) is a binding site for GTP. Residue Thr-26 coordinates Mg(2+). A G2 region spans residues 60-64 (GITIK). The interval 81–84 (DCPG) is G3. Residues 81-85 (DCPGH) and 136-139 (NKCD) contribute to the GTP site. The tract at residues 136–139 (NKCD) is G4. The G5 stretch occupies residues 174–176 (SAL).

The protein belongs to the TRAFAC class translation factor GTPase superfamily. Classic translation factor GTPase family. EF-Tu/EF-1A subfamily. In terms of assembly, monomer.

It is found in the cytoplasm. It carries out the reaction GTP + H2O = GDP + phosphate + H(+). In terms of biological role, GTP hydrolase that promotes the GTP-dependent binding of aminoacyl-tRNA to the A-site of ribosomes during protein biosynthesis. This chain is Elongation factor Tu, found in Aster yellows witches'-broom phytoplasma (strain AYWB).